A 202-amino-acid chain; its full sequence is Inner membrane-spanning protein YciB (202 aa).

Helical transmembrane passes span 47–67 (ILLA…WVHF), 75–95 (MLWV…AFQN), 101–121 (WKPT…AFIL), 146–166 (LSWI…AFNF), and 174–194 (FKLF…GMLL).

It belongs to the YciB family.

It localises to the cell inner membrane. Plays a role in cell envelope biogenesis, maintenance of cell envelope integrity and membrane homeostasis. The polypeptide is Inner membrane-spanning protein YciB (Dechloromonas aromatica (strain RCB)).